The following is a 369-amino-acid chain: MKNAYYIGLMSGTSMDGVDAVLVDFSGPQPQLICSHTEAIPSHLLKGLQRLCLPGADEINRLGRLDRNVGQLFALAVNNLLAKCNIAKEDIIAIGSHGQTVRHMPNLEVGFTLQIGDPNTIATETGIDVIADFRRKDIALGGQGAPLVPAFHQQTFAEIDKKRIILNIGGIANVTYLPGTSEHVLGFDTGPGNTLIDAWIQHVKSEPFDKNGEWAASGKTNPDLLAQLLSHPYFSLAYPKSTGRELFNQAWLEQQLSPFNHLDEEDIQSTLLDMTCHSIARDVIKLSPEGELFVCGGGAFNTQLMQRLAALLPGYKLDTTSALGVDPKWAEGIAFAWLAMRNHLGLPANLPAVTGASREAVLGGRFSAK.

12–19 (GTSMDGVD) provides a ligand contact to ATP.

This sequence belongs to the anhydro-N-acetylmuramic acid kinase family.

The enzyme catalyses 1,6-anhydro-N-acetyl-beta-muramate + ATP + H2O = N-acetyl-D-muramate 6-phosphate + ADP + H(+). It participates in amino-sugar metabolism; 1,6-anhydro-N-acetylmuramate degradation. It functions in the pathway cell wall biogenesis; peptidoglycan recycling. Its function is as follows. Catalyzes the specific phosphorylation of 1,6-anhydro-N-acetylmuramic acid (anhMurNAc) with the simultaneous cleavage of the 1,6-anhydro ring, generating MurNAc-6-P. Is required for the utilization of anhMurNAc either imported from the medium or derived from its own cell wall murein, and thus plays a role in cell wall recycling. The sequence is that of Anhydro-N-acetylmuramic acid kinase from Shewanella putrefaciens (strain CN-32 / ATCC BAA-453).